The sequence spans 107 residues: Protein Asterix (107 aa).

Over residues 1-15 the composition is skewed to polar residues; that stretch reads MSHSHGNASSVNDPR. The interval 1–25 is disordered; sequence MSHSHGNASSVNDPRQPSAAKPYIP. The chain crosses the membrane as a helical span at residues 82 to 98; sequence ISMAMMFAIMGLVTNYL.

Belongs to the Asterix family.

It is found in the membrane. This Arabidopsis thaliana (Mouse-ear cress) protein is Protein Asterix.